We begin with the raw amino-acid sequence, 491 residues long: Glucose-6-phosphate 1-dehydrogenase (491 aa).

Residues Arg-49, Asp-91–Val-92, and Lys-146 each bind NADP(+). Substrate is bound by residues His-176, Lys-180, Glu-214, and Asp-233. The active-site Proton acceptor is the His-238. The substrate site is built by Lys-338 and Lys-343.

Belongs to the glucose-6-phosphate dehydrogenase family.

The enzyme catalyses D-glucose 6-phosphate + NADP(+) = 6-phospho-D-glucono-1,5-lactone + NADPH + H(+). The protein operates within carbohydrate degradation; pentose phosphate pathway; D-ribulose 5-phosphate from D-glucose 6-phosphate (oxidative stage): step 1/3. Its function is as follows. Catalyzes the oxidation of glucose 6-phosphate to 6-phosphogluconolactone. In Buchnera aphidicola subsp. Acyrthosiphon pisum (strain APS) (Acyrthosiphon pisum symbiotic bacterium), this protein is Glucose-6-phosphate 1-dehydrogenase.